Consider the following 502-residue polypeptide: ATP synthase subunit alpha (502 aa).

Residue 169–176 (GDRQTGKT) coordinates ATP.

This sequence belongs to the ATPase alpha/beta chains family. In terms of assembly, F-type ATPases have 2 components, CF(1) - the catalytic core - and CF(0) - the membrane proton channel. CF(1) has five subunits: alpha(3), beta(3), gamma(1), delta(1), epsilon(1). CF(0) has three main subunits: a(1), b(2) and c(9-12). The alpha and beta chains form an alternating ring which encloses part of the gamma chain. CF(1) is attached to CF(0) by a central stalk formed by the gamma and epsilon chains, while a peripheral stalk is formed by the delta and b chains.

It is found in the cell membrane. It carries out the reaction ATP + H2O + 4 H(+)(in) = ADP + phosphate + 5 H(+)(out). Produces ATP from ADP in the presence of a proton gradient across the membrane. The alpha chain is a regulatory subunit. The polypeptide is ATP synthase subunit alpha (Staphylococcus aureus (strain COL)).